A 347-amino-acid chain; its full sequence is NADH-ubiquinone oxidoreductase chain 2 (347 aa).

The next 9 helical transmembrane spans lie at 1-21 (MNPF…MIVM), 59-79 (YFMT…INLL), 93-115 (TASM…HFWV), 149-169 (INPN…GWGG), 178-198 (IMAY…IYNP), 201-221 (TILN…MFAL), 239-259 (IITT…PLTG), 274-294 (DSII…YFYM), and 325-345 (LLPT…MLVV).

It belongs to the complex I subunit 2 family. In terms of assembly, core subunit of respiratory chain NADH dehydrogenase (Complex I) which is composed of 45 different subunits. Interacts with TMEM242.

The protein resides in the mitochondrion inner membrane. It carries out the reaction a ubiquinone + NADH + 5 H(+)(in) = a ubiquinol + NAD(+) + 4 H(+)(out). In terms of biological role, core subunit of the mitochondrial membrane respiratory chain NADH dehydrogenase (Complex I) which catalyzes electron transfer from NADH through the respiratory chain, using ubiquinone as an electron acceptor. Essential for the catalytic activity and assembly of complex I. In Hippopotamus amphibius (Hippopotamus), this protein is NADH-ubiquinone oxidoreductase chain 2.